We begin with the raw amino-acid sequence, 445 residues long: MAKYKVGMVSLGCDKNRVDSEIMLGMVQNEYELTNNPKEADIIIVNTCGFIEKAKQESINTILDMAKYKTSHNCKLLIATGCLTQRYGDELLELMPEIDIMLGVNDYAKINEAIMNFINGNNEKVKATNYSDVSINEGLRLITTDKATAYLRIAEGCDNFCTYCIIPKIRGKFRSRALESIVEEAKKLAENGVKELILIAQDTTNYGIDIYGEKKLHLVLRELAKIEGIEWIRVLYCYPEAIYDELIKEISVNDKVCNYLDLPIQHISNNVLKRMGRKTTKEEIIGKINDLRKNVPNIVLRTSLIVGFPGESCEDFNELKDFIKTIKLDKVGVFTYSREEGTPAAIMEDQIDEEVKKAREEEIMLLQKELSEEINKNKLGREYDVLIEKFNGEYYIGRSYEMAPDIDGCIYVKGNGAKKDQFCKVKIEKALEYDLVGVVCNESCK.

Residues 4-119 enclose the MTTase N-terminal domain; that stretch reads YKVGMVSLGC…INEAIMNFIN (116 aa). 6 residues coordinate [4Fe-4S] cluster: Cys13, Cys48, Cys82, Cys157, Cys161, and Cys164. One can recognise a Radical SAM core domain in the interval 143 to 373; that stretch reads TTDKATAYLR…MLLQKELSEE (231 aa). One can recognise a TRAM domain in the interval 376 to 441; the sequence is KNKLGREYDV…EYDLVGVVCN (66 aa).

The protein belongs to the methylthiotransferase family. RimO subfamily. It depends on [4Fe-4S] cluster as a cofactor.

It localises to the cytoplasm. The enzyme catalyses L-aspartate(89)-[ribosomal protein uS12]-hydrogen + (sulfur carrier)-SH + AH2 + 2 S-adenosyl-L-methionine = 3-methylsulfanyl-L-aspartate(89)-[ribosomal protein uS12]-hydrogen + (sulfur carrier)-H + 5'-deoxyadenosine + L-methionine + A + S-adenosyl-L-homocysteine + 2 H(+). Its function is as follows. Catalyzes the methylthiolation of an aspartic acid residue of ribosomal protein uS12. This is Ribosomal protein uS12 methylthiotransferase RimO from Clostridium perfringens (strain SM101 / Type A).